Reading from the N-terminus, the 299-residue chain is NAD kinase 1 (299 aa).

Asp-62 (proton acceptor) is an active-site residue. Residues 62–63 (DG), Lys-67, 143–144 (ND), Lys-173, and Asp-175 each bind NAD(+).

It belongs to the NAD kinase family. It depends on a divalent metal cation as a cofactor.

It is found in the cytoplasm. The catalysed reaction is NAD(+) + ATP = ADP + NADP(+) + H(+). Its function is as follows. Involved in the regulation of the intracellular balance of NAD and NADP, and is a key enzyme in the biosynthesis of NADP. Catalyzes specifically the phosphorylation on 2'-hydroxyl of the adenosine moiety of NAD to yield NADP. This Prochlorococcus marinus subsp. pastoris (strain CCMP1986 / NIES-2087 / MED4) protein is NAD kinase 1.